We begin with the raw amino-acid sequence, 305 residues long: Phosphatidylinositol:ceramide inositolphosphotransferase 2 (305 aa).

6 helical membrane-spanning segments follow: residues 34–54 (LLAGLICQYIHGLAAKGVHYI), 81–101 (ETVFTSVFLSFFLWTFHPFIL), 105–125 (KIYTVLIWCRVLAFLVACQFL), 168–188 (VMYGCGDLIFSSHMIFTLVFV), 198–218 (RFIKLFGWLTAIVQSLLIIAS), and 221–241 (HYSVDVVVAWYTVNLVVFCLD). Residue histidine 180 is part of the active site. Active-site residues include histidine 221 and aspartate 225.

It belongs to the sphingomyelin synthase family. As to expression, expressed in leaves, roots, stems, flowers and siliques.

Its subcellular location is the golgi apparatus. It localises to the trans-Golgi network membrane. It carries out the reaction an N-(2R-hydroxy-very-long-chain fatty acyl)-(R)-4-hydroxysphingoid base + a 1,2-diacyl-sn-glycero-3-phospho-(1D-myo-inositol) = a 1D-myo-inositol-1-phospho-N-[(R)-2-hydroxy-very-long-chain fatty acyl]-(R)-4-hydroxysphingoid base + a 1,2-diacyl-sn-glycerol. It participates in sphingolipid metabolism. Catalyzes the transfer of the phosphorylinositol group from phosphatidylinositol (PI) to phytoceramide, an essential step in sphingolipid biosynthesis. May play an important role in modulating plant programmed cell death (PCD) associated with defense (e.g. toward Golovinomyces cichoracearum) by promoting sphingolipid metabolism and thus regulating ceramide accumulation. This is Phosphatidylinositol:ceramide inositolphosphotransferase 2 from Arabidopsis thaliana (Mouse-ear cress).